A 141-amino-acid chain; its full sequence is Hemoglobin subunit alpha-D (141 aa).

In terms of domain architecture, Globin spans 1–141 (MLTAEDKKLI…VAAVLAEKYR (141 aa)). The heme b site is built by His-58 and His-87.

This sequence belongs to the globin family. As to quaternary structure, heterotetramer of two alpha-D chains and two beta chains. In terms of tissue distribution, red blood cells.

Involved in oxygen transport from the lung to the various peripheral tissues. This chain is Hemoglobin subunit alpha-D (HBAD), found in Accipiter gentilis (Northern goshawk).